The primary structure comprises 269 residues: Energy-coupling factor transporter ATP-binding protein EcfA1 (269 aa).

The 235-residue stretch at 8 to 242 (IVFKNVSFQY…AEELTRIGLD (235 aa)) folds into the ABC transporter domain. Residue 42–49 (GHNGSGKS) participates in ATP binding.

This sequence belongs to the ABC transporter superfamily. Energy-coupling factor EcfA family. Forms a stable energy-coupling factor (ECF) transporter complex composed of 2 membrane-embedded substrate-binding proteins (S component), 2 ATP-binding proteins (A component) and 2 transmembrane proteins (T component).

Its subcellular location is the cell membrane. Functionally, ATP-binding (A) component of a common energy-coupling factor (ECF) ABC-transporter complex. Unlike classic ABC transporters this ECF transporter provides the energy necessary to transport a number of different substrates. The protein is Energy-coupling factor transporter ATP-binding protein EcfA1 of Staphylococcus aureus (strain USA300).